We begin with the raw amino-acid sequence, 263 residues long: Zinc finger protein STAMENLESS 1 (263 aa).

The segment at 1–51 (MNSSRRQEGSPLDLNNLPDEFGKQTVESSTTTAASSAEASRVTKKKSNGGK) is disordered. Low complexity predominate over residues 25-40 (TVESSTTTAASSAEAS). The segment at 58–80 (YECRFCSLKFCKSQALGGHMNRH) adopts a C2H2-type zinc-finger fold.

As to expression, expressed in leaf primordia, inflorescence meristem, rachis branch meristems, floral meristem and floral organ primordia.

The protein localises to the nucleus. Functionally, regulates floral organ identity and cell proliferation in the inner floral whorls. Probably specifies the identities of lodicule and stamen through positive regulation of MADS16 expression. May contribute to morphogenesis by suppressing OSH1 expression in the lateral organs. The chain is Zinc finger protein STAMENLESS 1 (SL1) from Oryza sativa subsp. japonica (Rice).